The following is a 413-amino-acid chain: Phosphopentomutase (413 aa).

Mn(2+) is bound by residues D11, D306, H311, D347, H348, and H359.

It belongs to the phosphopentomutase family. Mn(2+) is required as a cofactor.

The protein localises to the cytoplasm. The catalysed reaction is 2-deoxy-alpha-D-ribose 1-phosphate = 2-deoxy-D-ribose 5-phosphate. It carries out the reaction alpha-D-ribose 1-phosphate = D-ribose 5-phosphate. Its pathway is carbohydrate degradation; 2-deoxy-D-ribose 1-phosphate degradation; D-glyceraldehyde 3-phosphate and acetaldehyde from 2-deoxy-alpha-D-ribose 1-phosphate: step 1/2. Isomerase that catalyzes the conversion of deoxy-ribose 1-phosphate (dRib-1-P) and ribose 1-phosphate (Rib-1-P) to deoxy-ribose 5-phosphate (dRib-5-P) and ribose 5-phosphate (Rib-5-P), respectively. In Helicobacter pylori (strain J99 / ATCC 700824) (Campylobacter pylori J99), this protein is Phosphopentomutase.